Consider the following 424-residue polypeptide: MTAIIDIVGREILDSRGNPTVEVDVVLEDGSMGRAAVPSGASTGAHEAVELRDGGARYLGKGVLKAVEAVNGELFEAIGGMEAENQIHIDQTMIELDGTPNKSRLGANAILGVSLAVAKAAADAAGLPLYRYVGGTKAHILPVPMMNIINGGAHADNPIDFQEFMILPVGAPTLREGVRWGSEIFHTLRKKLKDAGHNTNVGDEGGFAPNLKSAPVALDFIMESIEKAGFKPGEEIALGLDCAATEFFKDGNYVYEGEKKTRDPKAQAKYLAKLAADYPIVSIEDGLAEDDWEGWKYLTDLIGKKTQLVGDDLFVTNTARLRDGIRMGVANSILVKVNQIGSLTETLDAVETAHKAGYTAVMSHRSGETEDSTIADLAVATNCGQIKTGSLSRSDRMAKYNQLIRIEEELGKQARYAGKSVIKG.

Q162 lines the (2R)-2-phosphoglycerate pocket. E204 (proton donor) is an active-site residue. The Mg(2+) site is built by D241, E284, and D311. (2R)-2-phosphoglycerate contacts are provided by K336, R365, S366, and K387. The Proton acceptor role is filled by K336.

This sequence belongs to the enolase family. Requires Mg(2+) as cofactor.

It is found in the cytoplasm. The protein resides in the secreted. The protein localises to the cell surface. The enzyme catalyses (2R)-2-phosphoglycerate = phosphoenolpyruvate + H2O. Its pathway is carbohydrate degradation; glycolysis; pyruvate from D-glyceraldehyde 3-phosphate: step 4/5. In terms of biological role, catalyzes the reversible conversion of 2-phosphoglycerate (2-PG) into phosphoenolpyruvate (PEP). It is essential for the degradation of carbohydrates via glycolysis. The protein is Enolase of Mesorhizobium japonicum (strain LMG 29417 / CECT 9101 / MAFF 303099) (Mesorhizobium loti (strain MAFF 303099)).